Reading from the N-terminus, the 289-residue chain is Signal peptidase I (289 aa).

The Cytoplasmic segment spans residues 1 to 43; it reads MKKLTSTTTTLWDNKLFINNLKNFMQTNTESNNNKTTAQEWKS. A helical transmembrane segment spans residues 44–64; sequence FILVVVIALMIRILIIESFVV. The Periplasmic portion of the chain corresponds to 65–289; the sequence is PTGSMKATIL…IFRNLYSIED (225 aa). Active-site residues include serine 68 and lysine 131.

Belongs to the peptidase S26 family.

It is found in the cell inner membrane. The catalysed reaction is Cleavage of hydrophobic, N-terminal signal or leader sequences from secreted and periplasmic proteins.. This is Signal peptidase I (lepB) from Rickettsia bellii (strain OSU 85-389).